The following is a 449-amino-acid chain: Sulfite exporter TauE/SafE family protein 5 (449 aa).

A run of 12 helical transmembrane segments spans residues 1 to 21, 57 to 77, 78 to 98, 101 to 121, 127 to 147, 150 to 170, 224 to 244, 259 to 279, 315 to 335, 353 to 373, 378 to 398, and 409 to 429; these read MKTL…NANQ, AIIM…AGGI, GGGG…LKTA, FSAF…LFGG, YDLA…GVIC, VLPE…SSLK, IPWT…VIYL, PCGV…LIFT, AMSF…GMLI, TSFM…LLGM, TAYV…VLVQ, and IIVF…TSFG.

It belongs to the 4-toluene sulfonate uptake permease (TSUP) (TC 2.A.102) family.

The protein localises to the membrane. This Arabidopsis thaliana (Mouse-ear cress) protein is Sulfite exporter TauE/SafE family protein 5.